Reading from the N-terminus, the 277-residue chain is Small ribosomal subunit protein uS2 (277 aa).

A disordered region spans residues 255 to 277 (AVATTDEASAPSAAATETTTEEG). Residues 257-277 (ATTDEASAPSAAATETTTEEG) are compositionally biased toward low complexity.

It belongs to the universal ribosomal protein uS2 family.

This chain is Small ribosomal subunit protein uS2, found in Mycobacteroides abscessus (strain ATCC 19977 / DSM 44196 / CCUG 20993 / CIP 104536 / JCM 13569 / NCTC 13031 / TMC 1543 / L948) (Mycobacterium abscessus).